The sequence spans 255 residues: Ribosomal RNA small subunit methyltransferase J (255 aa).

S-adenosyl-L-methionine-binding positions include 107-108 (RD), 123-124 (ER), and D178. The disordered stretch occupies residues 228–247 (ARAEPLSGRKPSHQIPGKTT).

This sequence belongs to the methyltransferase superfamily. RsmJ family.

It is found in the cytoplasm. The enzyme catalyses guanosine(1516) in 16S rRNA + S-adenosyl-L-methionine = N(2)-methylguanosine(1516) in 16S rRNA + S-adenosyl-L-homocysteine + H(+). In terms of biological role, specifically methylates the guanosine in position 1516 of 16S rRNA. This Thioalkalivibrio sulfidiphilus (strain HL-EbGR7) protein is Ribosomal RNA small subunit methyltransferase J.